Consider the following 163-residue polypeptide: uncharacterized protein (163 aa).

Expressed in keratinocytes.

This is an uncharacterized protein from Homo sapiens (Human).